An 82-amino-acid polypeptide reads, in one-letter code: Defensin-like protein 275 (82 aa).

The N-terminal stretch at 1-23 is a signal peptide; sequence MALSKFQLVALLITYTLLFSCQS. Disulfide bonds link C36-C78, C42-C65, C48-C76, and C52-C77.

This sequence belongs to the DEFL family.

It localises to the secreted. In Arabidopsis thaliana (Mouse-ear cress), this protein is Defensin-like protein 275.